The primary structure comprises 409 residues: Peptide chain release factor subunit 1 (409 aa).

The protein belongs to the eukaryotic release factor 1 family. In terms of assembly, heterodimer of two subunits, one of which binds GTP.

The protein resides in the cytoplasm. Functionally, directs the termination of nascent peptide synthesis (translation) in response to the termination codons UAA, UAG and UGA. This is Peptide chain release factor subunit 1 from Methanopyrus kandleri (strain AV19 / DSM 6324 / JCM 9639 / NBRC 100938).